Consider the following 1320-residue polypeptide: Centrosomin (1320 aa).

The disordered stretch occupies residues 20 to 41 (ASFDVPRPPGGGNSPLPSQGRS). A coiled-coil region spans residues 97–516 (RKTVDVKMEL…SSQEKEIKKL (420 aa)). Residues 517–530 (NQENEQSANKENDC) are compositionally biased toward basic and acidic residues. Positions 517–554 (NQENEQSANKENDCAKTVISPSSSGRSMSDNEASSQEM) are disordered. Residues 535 to 554 (ISPSSSGRSMSDNEASSQEM) are compositionally biased toward polar residues. Ser545 bears the Phosphoserine mark. Coiled coils occupy residues 626-654 (EADL…KVDV) and 712-983 (NSLL…LKLA). A Nuclear localization signal motif is present at residues 644 to 656 (RNKLLQRKVDVLF). The residue at position 782 (Thr782) is a Phosphothreonine. At Ser785 the chain carries Phosphoserine. Basic and acidic residues predominate over residues 810 to 823 (KKELEKRRSSEGQR). 2 disordered regions span residues 810–849 (KKEL…SEPD) and 863–893 (SNSL…NRNS). Residues 831-843 (LPSQQFDNQSESE) show a composition bias toward polar residues. A phosphoserine mark is found at Ser874, Ser876, Ser878, Ser1191, Ser1234, Ser1237, and Ser1239. Residues 1220 to 1249 (VEMKTEGSASPKAKSEESTSPDSKSNVATG) form a disordered region. A compositionally biased stretch (polar residues) spans 1237 to 1247 (STSPDSKSNVA).

As to quaternary structure, monomer. Developing visceral mesoderm of the midgut, the central and peripheral nervous system, and developing gonads. Isoform J: Expressed in ovaries, testis and embryos. Isoform A: Expressed in testis only.

The protein resides in the cytoplasm. Its subcellular location is the cytoskeleton. The protein localises to the microtubule organizing center. It localises to the centrosome. It is found in the flagellum basal body. The protein resides in the perinuclear region. In terms of biological role, core component of the centrosome throughout spermatogenesis. May participate in mitotic spindle assembly and the mechanics of morphogenesis through an interaction with microtubules, either directly or indirectly. Is a target of several homeotic genes. The sequence is that of Centrosomin (cnn) from Drosophila melanogaster (Fruit fly).